Reading from the N-terminus, the 1260-residue chain is Methionine synthase (1260 aa).

One can recognise a Hcy-binding domain in the interval 13 to 333 (FGIIRKILSE…DHIRAFCNAI (321 aa)). Residues C255, C318, and C319 each coordinate Zn(2+). A Pterin-binding domain is found at 364–625 (FVNVGERCNV…IPKDLLKLVE (262 aa)). The region spanning 655–749 (EVEEWRNKPV…FMEEEKRLKR (95 aa)) is the B12-binding N-terminal domain. Methylcob(III)alamin-binding positions include E699, 775 to 779 (GDVHD), H778, S823, T827, and A879. The 118-residue stretch at 766 to 883 (GVVVLATVKG…VHVLDASRSV (118 aa)) folds into the B12-binding domain. Residues 916 to 1256 (SLKDRKYTSL…LSSILSYDRL (341 aa)) form the AdoMet activation domain. S-adenosyl-L-methionine contacts are provided by residues D966, R1163, and 1218–1219 (YF).

The protein belongs to the vitamin-B12 dependent methionine synthase family. The cofactor is methylcob(III)alamin. It depends on Zn(2+) as a cofactor.

The enzyme catalyses (6S)-5-methyl-5,6,7,8-tetrahydrofolate + L-homocysteine = (6S)-5,6,7,8-tetrahydrofolate + L-methionine. It functions in the pathway amino-acid biosynthesis; L-methionine biosynthesis via de novo pathway; L-methionine from L-homocysteine (MetH route): step 1/1. Functionally, catalyzes the transfer of a methyl group from methyl-cobalamin to homocysteine, yielding enzyme-bound cob(I)alamin and methionine. Subsequently, remethylates the cofactor using methyltetrahydrofolate. The sequence is that of Methionine synthase (mtr) from Dictyostelium discoideum (Social amoeba).